The sequence spans 207 residues: Infectivity protein P11 (207 aa).

A helical membrane pass occupies residues 13–28 (WWIVAAIGGLAAFLLL). Positions 64–95 (AALQANTQLSAQNAQLQAQMDASRLQLETQLN) form a coiled coil.

The protein localises to the virion membrane. Functionally, component of the phage ejection machinery. Pilot protein for the formation of the tube that conducts the genome into the target cell. Probably involved in penetration of the bacterial outer membrane and for making the peptidoglycan layer accessible to the viral transglycosylase. Essential for viral infectivity. This is Infectivity protein P11 (XI) from Enterobacteria phage PRD1 (Bacteriophage PRD1).